Here is a 386-residue protein sequence, read N- to C-terminus: Formate-dependent phosphoribosylglycinamide formyltransferase (386 aa).

N(1)-(5-phospho-beta-D-ribosyl)glycinamide contacts are provided by residues 15 to 16 (EL) and Glu75. ATP is bound by residues Arg107, Lys148, 153–158 (SSGKGQ), 188–191 (EQFI), and Glu196. One can recognise an ATP-grasp domain in the interval 112 to 301 (ALAAQQLNLQ…EFELHLRAIV (190 aa)). Residues Glu260 and Glu272 each contribute to the Mg(2+) site. Residues Asp279, Lys349, and 356–357 (RR) contribute to the N(1)-(5-phospho-beta-D-ribosyl)glycinamide site.

Belongs to the PurK/PurT family. As to quaternary structure, homodimer.

The catalysed reaction is N(1)-(5-phospho-beta-D-ribosyl)glycinamide + formate + ATP = N(2)-formyl-N(1)-(5-phospho-beta-D-ribosyl)glycinamide + ADP + phosphate + H(+). The protein operates within purine metabolism; IMP biosynthesis via de novo pathway; N(2)-formyl-N(1)-(5-phospho-D-ribosyl)glycinamide from N(1)-(5-phospho-D-ribosyl)glycinamide (formate route): step 1/1. Its function is as follows. Involved in the de novo purine biosynthesis. Catalyzes the transfer of formate to 5-phospho-ribosyl-glycinamide (GAR), producing 5-phospho-ribosyl-N-formylglycinamide (FGAR). Formate is provided by PurU via hydrolysis of 10-formyl-tetrahydrofolate. In Francisella tularensis subsp. novicida (strain U112), this protein is Formate-dependent phosphoribosylglycinamide formyltransferase.